Here is a 271-residue protein sequence, read N- to C-terminus: Type III pantothenate kinase (271 aa).

6–13 (DVRNTNIV) is an ATP binding site. 109–112 (GADR) serves as a coordination point for substrate. Asp-111 acts as the Proton acceptor in catalysis. Asp-131 contacts K(+). Residue Thr-134 coordinates ATP. Residue Thr-186 participates in substrate binding.

It belongs to the type III pantothenate kinase family. As to quaternary structure, homodimer. It depends on NH4(+) as a cofactor. K(+) serves as cofactor.

It is found in the cytoplasm. The enzyme catalyses (R)-pantothenate + ATP = (R)-4'-phosphopantothenate + ADP + H(+). It functions in the pathway cofactor biosynthesis; coenzyme A biosynthesis; CoA from (R)-pantothenate: step 1/5. Functionally, catalyzes the phosphorylation of pantothenate (Pan), the first step in CoA biosynthesis. The sequence is that of Type III pantothenate kinase from Rhodococcus jostii (strain RHA1).